Consider the following 639-residue polypeptide: MAU2 chromatid cohesion factor homolog (639 aa).

TPR repeat units follow at residues 453-486 and 493-526; these read GGFY…ANAE and SCSL…ASKI.

It belongs to the SCC4/mau-2 family. As to quaternary structure, interacts with Nipped-B to form the cohesin loading complex.

It is found in the nucleus. Its subcellular location is the nucleoplasm. Functionally, required for association of the cohesin complex with chromatin during interphase. Plays a role in sister chromatid cohesion and normal progression through prometaphase. The sequence is that of MAU2 chromatid cohesion factor homolog from Drosophila ananassae (Fruit fly).